The primary structure comprises 252 residues: Triosephosphate isomerase (252 aa).

Substrate is bound at residue 8–10 (NWK). His95 serves as the catalytic Electrophile. Glu167 functions as the Proton acceptor in the catalytic mechanism. Substrate-binding positions include Gly173, Ser212, and 233 to 234 (GG).

This sequence belongs to the triosephosphate isomerase family. As to quaternary structure, homodimer.

It localises to the cytoplasm. The catalysed reaction is D-glyceraldehyde 3-phosphate = dihydroxyacetone phosphate. It functions in the pathway carbohydrate biosynthesis; gluconeogenesis. The protein operates within carbohydrate degradation; glycolysis; D-glyceraldehyde 3-phosphate from glycerone phosphate: step 1/1. Its function is as follows. Involved in the gluconeogenesis. Catalyzes stereospecifically the conversion of dihydroxyacetone phosphate (DHAP) to D-glyceraldehyde-3-phosphate (G3P). This chain is Triosephosphate isomerase, found in Lawsonia intracellularis (strain PHE/MN1-00).